A 413-amino-acid chain; its full sequence is Zinc finger protein 821 (413 aa).

The disordered stretch occupies residues 26–83 (RQAMMKTDFPGDLGSQRQAIQQLRDQDSSSSDSEGDEEETTQDEVSSHTSEEDGGVVK). A compositionally biased stretch (acidic residues) spans 58 to 67 (SEGDEEETTQ). 2 C2H2-type zinc fingers span residues 117-141 (QLCQ…VYQH) and 151-173 (YMCP…LLIH). Positions 260–367 (ALRRQNEPLE…EKMDMMLRAQ (108 aa)) form a coiled coil. The interval 279–320 (RTAKKSRRDNETPEEREVRRMRDREAKRLQRMQETDEQRARR) is disordered.

Belongs to the krueppel C2H2-type zinc-finger protein family.

The protein resides in the nucleus. In terms of biological role, may be involved in transcriptional regulation. This is Zinc finger protein 821 (Znf821) from Mus musculus (Mouse).